We begin with the raw amino-acid sequence, 97 residues long: Co-chaperonin GroES (97 aa).

Belongs to the GroES chaperonin family. Heptamer of 7 subunits arranged in a ring. Interacts with the chaperonin GroEL.

It localises to the cytoplasm. In terms of biological role, together with the chaperonin GroEL, plays an essential role in assisting protein folding. The GroEL-GroES system forms a nano-cage that allows encapsulation of the non-native substrate proteins and provides a physical environment optimized to promote and accelerate protein folding. GroES binds to the apical surface of the GroEL ring, thereby capping the opening of the GroEL channel. This Aeromonas hydrophila subsp. hydrophila (strain ATCC 7966 / DSM 30187 / BCRC 13018 / CCUG 14551 / JCM 1027 / KCTC 2358 / NCIMB 9240 / NCTC 8049) protein is Co-chaperonin GroES.